Consider the following 208-residue polypeptide: MEAPPVTTMPVSGGTINMMEYLLQGSILDQGLESLLHRLRGLCDNMEPETFADHESVYLLKGQQASPFVLRARRPLDRPGAPWHLRYLGQPEAGDRSRHTLVRNCVDIATSDVLPEFLQEMGFRMDHEFVARGHLFRKGVMKVAVYKVFRVLVAGAAEGAEPLSLSYLVELSAVAPAGQDNIADEVRGFAEQLRPLVQLEKIDPKRLM.

Belongs to the Mediator complex subunit 18 family. In terms of assembly, component of the Mediator complex.

It is found in the nucleus. Its function is as follows. Component of the Mediator complex, a coactivator involved in the regulated transcription of nearly all RNA polymerase II-dependent genes. Mediator functions as a bridge to convey information from gene-specific regulatory proteins to the basal RNA polymerase II transcription machinery. Mediator is recruited to promoters by direct interactions with regulatory proteins and serves as a scaffold for the assembly of a functional preinitiation complex with RNA polymerase II and the general transcription factors. The polypeptide is Mediator of RNA polymerase II transcription subunit 18 (med18) (Xenopus tropicalis (Western clawed frog)).